The primary structure comprises 780 residues: MAKRTFSNLETFLIFLLVMMSAITVALLSLLFITSGTIENHKDLGGHFFSTTQSPPATQGSTAAQRSTATQHSTATQSSTATQTSPVPLTPESPLFQNFSGYHIGVGRADCTGQVADINLMGYGKSGQNAQGILTRLYSRAFIMAEPDGSNRTVFVSIDIGMVSQRLRLEVLNRLQSKYGSLYRRDNVILSGTHTHSGPAGYFQYTVFVIASEGFSNQTFQHMVTGILKSIDIAHTNMKPGKIFINKGNVDGVQINRSPYSYLQNPQSERARYSSNTDKEMIVLKMVDLNGDDLGLISWFAIHPVSMNNSNHLVNSDNVGYASYLLEQEKNKGYLPGQGPFVAAFASSNLGDVSPNILGPRCINTGESCDNANSTCPIGGPSMCIAKGPGQDMFDSTQIIGRAMYQRAKELYASASQEVTGPLASAHQWVDMTDVTVWLNSTHASKTCKPALGYSFAAGTIDGVGGLNFTQGKTEGDPFWDTIRDQILGKPSEEIKECHKPKPILLHTGELSKPHPWHPDIVDVQIITLGSLAITAIPGEFTTMSGRRLREAVQAEFASHGMQNMTVVISGLCNVYTHYITTYEEYQAQRYEAASTIYGPHTLSAYIQLFRNLAKAIATDTVANLSRGPEPPFFKQLIVPLIPSIVDRAPKGRTFGDVLQPAKPEYRVGEVAEVIFVGANPKNSVQNQTHQTFLTVEKYEATSTSWQIVCNDASWETRFYWHKGLLGLSNATVEWHIPDTAQPGIYRIRYFGHNRKQDILKPAVILSFEGTSPAFEVVTI.

Residues 1-12 (MAKRTFSNLETF) are Cytoplasmic-facing. The chain crosses the membrane as a helical; Signal-anchor for type II membrane protein span at residues 13–33 (LIFLLVMMSAITVALLSLLFI). At 34-780 (TSGTIENHKD…TSPAFEVVTI (747 aa)) the chain is on the lumenal side. The tract at residues 47–90 (HFFSTTQSPPATQGSTAAQRSTATQHSTATQSSTATQTSPVPLT) is disordered. The span at 57–85 (ATQGSTAAQRSTATQHSTATQSSTATQTS) shows a compositional bias: low complexity. A glycan (O-linked (GalNAc...) threonine) is linked at Thr-62. Ser-67 is a glycosylation site (O-linked (GalNAc...) serine). O-linked (GalNAc...) threonine glycosylation is found at Thr-68 and Thr-70. Ser-73 is a glycosylation site (O-linked (GalNAc...) serine). O-linked (GalNAc...) threonine glycans are attached at residues Thr-74 and Thr-76. 2 O-linked (GalNAc...) serine glycosylation sites follow: Ser-78 and Ser-79. Residues Thr-80, Thr-82, and Thr-84 are each glycosylated (O-linked (GalNAc...) threonine). Asn-98 is a glycosylation site (N-linked (GlcNAc...) asparagine). Leu-134 contacts Ca(2+). The N-linked (GlcNAc...) asparagine glycan is linked to Asn-151. Position 194 (His-194) interacts with Zn(2+). Residue Asn-217 is glycosylated (N-linked (GlcNAc...) asparagine). His-303 provides a ligand contact to Zn(2+). A glycan (N-linked (GlcNAc...) asparagine) is linked at Asn-308. Ser-354 (nucleophile) is an active-site residue. 2 cysteine pairs are disulfide-bonded: Cys-362-Cys-376 and Cys-369-Cys-384. Asn-440 and Asn-468 each carry an N-linked (GlcNAc...) asparagine glycan. The cysteines at positions 448 and 498 are disulfide-linked. Glu-540 lines the Zn(2+) pocket. Asn-564 carries an N-linked (GlcNAc...) asparagine glycan. Tyr-579 lines the Zn(2+) pocket. Asp-712, Ser-714, and Thr-717 together coordinate Ca(2+). A glycan (N-linked (GlcNAc...) asparagine) is linked at Asn-730. Residues 770-780 (GTSPAFEVVTI) are required for correct folding and localization. O-linked (GalNAc...) threonine glycosylation occurs at Thr-779.

The protein belongs to the neutral ceramidase family. The cofactor is Zn(2+). Post-translationally, proteolytic cleavage of the N-terminus removes the signal-anchor and produces a soluble form of the protein. In terms of processing, N-glycosylated. Required for enzyme activity. O-glycosylated. Required to retain it as a type II membrane protein at the cell surface. Post-translationally, phosphorylated. May prevent ubiquitination and subsequent degradation. In terms of processing, ubiquitinated, leading to its degradation by the proteasome. Ubiquitination is triggered by nitric oxide. In terms of tissue distribution, primarily expressed in intestine. Ubiquitously expressed with higher levels in kidney, skeletal muscle and heart. The ubiquitous expression observed for ASAH2 might be an experimental artifact due to the paralog ASAH2B.

The protein resides in the cell membrane. The protein localises to the membrane raft. Its subcellular location is the membrane. It is found in the caveola. It localises to the golgi apparatus membrane. The protein resides in the mitochondrion. The protein localises to the secreted. Its subcellular location is the extracellular exosome. The enzyme catalyses an N-acylsphing-4-enine + H2O = sphing-4-enine + a fatty acid. It carries out the reaction N-dodecanoylsphing-4-enine + H2O = dodecanoate + sphing-4-enine. The catalysed reaction is N-hexadecanoylsphing-4-enine + H2O = sphing-4-enine + hexadecanoate. It catalyses the reaction N-octanoylsphing-4-enine + H2O = octanoate + sphing-4-enine. The enzyme catalyses N-(hexanoyl)sphing-4-enine + H2O = hexanoate + sphing-4-enine. It carries out the reaction N-octadecanoylsphing-4-enine + H2O = sphing-4-enine + octadecanoate. The catalysed reaction is N-tetradecanoylsphing-4-enine + H2O = tetradecanoate + sphing-4-enine. It catalyses the reaction N-(9Z-octadecenoyl)-sphing-4-enine + H2O = sphing-4-enine + (9Z)-octadecenoate. The enzyme catalyses N-(15Z-tetracosenoyl)-sphing-4-enine + H2O = (15Z)-tetracosenoate + sphing-4-enine. It carries out the reaction sphinganine + hexadecanoate = N-hexadecanoylsphinganine + H2O. The catalysed reaction is N-(octadecanoyl)-sphinganine + H2O = sphinganine + octadecanoate. It participates in lipid metabolism; sphingolipid metabolism. With respect to regulation, inhibited by dithiothreitol (DTT) and 2-mercaptoethanol. Activity is mildly stimulated by Ca(2+) and Mg(2+), but is not inhibited by EDTA. Activity is inhibited by millimolar levels of Fe(2+), Zn(2+) and Cu(2+). Inhibited by cholesterol. Its function is as follows. Plasma membrane ceramidase that hydrolyzes sphingolipid ceramides into sphingosine and free fatty acids at neutral pH. Ceramides, sphingosine, and its phosphorylated form sphingosine-1-phosphate are bioactive lipids that mediate cellular signaling pathways regulating several biological processes including cell proliferation, apoptosis and differentiation. Also catalyzes the reverse reaction allowing the synthesis of ceramides from fatty acids and sphingosine. Together with sphingomyelinase, participates in the production of sphingosine and sphingosine-1-phosphate from the degradation of sphingomyelin, a sphingolipid enriched in the plasma membrane of cells. Also participates in the hydrolysis of ceramides from the extracellular milieu allowing the production of sphingosine-1-phosphate inside and outside cells. This is the case for instance with the digestion of dietary sphingolipids in the intestinal tract. This chain is Neutral ceramidase (ASAH2), found in Homo sapiens (Human).